The following is a 74-amino-acid chain: uncharacterized protein (74 aa).

This is an uncharacterized protein from Escherichia coli (strain K12).